The chain runs to 300 residues: Cation-efflux pump FieF (300 aa).

4 helical membrane-spanning segments follow: residues 12–32 (AAIA…FAWW), 39–59 (ILAA…NLLV), 82–102 (AALA…LTGI), and 114–134 (PGVG…LVSF). Residues Asp-45 and Asp-49 each contribute to the Zn(2+) site. Residues His-153 and Asp-157 each coordinate Zn(2+). The next 2 membrane-spanning stretches (helical) occupy residues 156-176 (SDVM…YGWH) and 178-198 (ADAL…LRMG).

The protein belongs to the cation diffusion facilitator (CDF) transporter (TC 2.A.4) family. FieF subfamily. As to quaternary structure, homodimer.

It is found in the cell inner membrane. The catalysed reaction is Zn(2+)(in) + H(+)(out) = Zn(2+)(out) + H(+)(in). The enzyme catalyses Cd(2+)(in) + H(+)(out) = Cd(2+)(out) + H(+)(in). It carries out the reaction Fe(2+)(in) + H(+)(out) = Fe(2+)(out) + H(+)(in). In terms of biological role, divalent metal cation transporter which exports Zn(2+), Cd(2+) and possibly Fe(2+). May be involved in zinc and iron detoxification by efflux. The sequence is that of Cation-efflux pump FieF from Escherichia coli O127:H6 (strain E2348/69 / EPEC).